We begin with the raw amino-acid sequence, 268 residues long: Bis(5'-nucleosyl)-tetraphosphatase, symmetrical (268 aa).

The protein belongs to the Ap4A hydrolase family.

It catalyses the reaction P(1),P(4)-bis(5'-adenosyl) tetraphosphate + H2O = 2 ADP + 2 H(+). Its function is as follows. Hydrolyzes diadenosine 5',5'''-P1,P4-tetraphosphate to yield ADP. This is Bis(5'-nucleosyl)-tetraphosphatase, symmetrical from Vibrio parahaemolyticus serotype O3:K6 (strain RIMD 2210633).